The chain runs to 504 residues: Alkylcitrate dehydratase phiI (504 aa).

This sequence belongs to the PrpD family. As to quaternary structure, monomer.

The enzyme catalyses (4E,11E)-2-hydroxytrideca-4,11-dien-1,2,3-tricarboxylate + 2 H(+) = [4-(deca-1,8-diyl)-2,5-dioxo-2,5-dihydro-3-furanyl]acetate + 2 H2O. The protein operates within secondary metabolite biosynthesis. Alkylcitrate dehydratase; part of the gene cluster that mediates the biosynthesis of the antihypercholesterolemic agents phomoidrides which are dimeric anhydrides. Within the pathway, the alkylcitrate synthase (ACS) phiJ and the alkylcitrate dehydratase (ACDH) phiI produce the decarboxylated monomeric anhydrides by coupling the C12-fatty acyl product from phiA with oxalacetic acid. The pathway begins with the highly reducing polyketide synthase phiA that catalyzes the formation of a C12-fatty acyl-ACP, starting from one acetate and 5 malonate units. The hydrolase phiM is involved in the release of the C12-fatty acyl chain from phiA. The alkylcitrate synthase (ACS) phiJ and the alkylcitrate dehydratase (ACDH) phiI then give rise to decarboxylated monomeric anhydrides by coupling the C12-fatty acyl chain with oxalacetic acid. The cyclase phiC is responsible for the dimerization of the monomeric anhydrides which leads to the production of prephomoidride that contains the characteristic bicyclo[4.3.1]deca-1,6-diene system of phomoidrides. Iterative oxidation catalyzed by the alpha-ketoglutarate-dependent dioxygenase phiK produced then phomoidride A. Finally, the methyltransferase phiE converts phomoidride A to phomoidride B via an acetalization reaction. The phosphatidylethanolamine-binding protein phiB and phiN are not essential for dimerization and their functions have still to be determined. The polypeptide is Alkylcitrate dehydratase phiI (Fungal sp. (strain ATCC 74256)).